Reading from the N-terminus, the 139-residue chain is uncharacterized protein (139 aa).

In terms of domain architecture, HTH asnC-type spans 1 to 62 (MDDTDLQILS…NICYEKLNKH (62 aa)). A DNA-binding region (H-T-H motif) is located at residues 20–39 (MVELGKLVGLSSPSAAERVR).

This is an uncharacterized protein from Bacillus subtilis (strain 168).